Reading from the N-terminus, the 439-residue chain is GTPase Der (439 aa).

EngA-type G domains are found at residues 4-166 and 175-350; these read PIVA…PAQD and IRIA…EEAS. GTP contacts are provided by residues 10–17, 57–61, 119–122, 181–188, 228–232, and 293–296; these read GRPNVGKS, DTGGL, NKVE, DTAGM, and NKWD. One can recognise a KH-like domain in the interval 351-435; sequence KRVATADLNN…PIRFFLRKRE (85 aa).

The protein belongs to the TRAFAC class TrmE-Era-EngA-EngB-Septin-like GTPase superfamily. EngA (Der) GTPase family. As to quaternary structure, associates with the 50S ribosomal subunit.

Its function is as follows. GTPase that plays an essential role in the late steps of ribosome biogenesis. The chain is GTPase Der from Desulforamulus reducens (strain ATCC BAA-1160 / DSM 100696 / MI-1) (Desulfotomaculum reducens).